Here is a 709-residue protein sequence, read N- to C-terminus: Polyribonucleotide nucleotidyltransferase (709 aa).

Mg(2+) contacts are provided by aspartate 487 and aspartate 493. In terms of domain architecture, KH spans proline 554–isoleucine 613. The region spanning glycine 623–lysine 691 is the S1 motif domain.

The protein belongs to the polyribonucleotide nucleotidyltransferase family. In terms of assembly, component of the RNA degradosome, which is a multiprotein complex involved in RNA processing and mRNA degradation. It depends on Mg(2+) as a cofactor.

Its subcellular location is the cytoplasm. The catalysed reaction is RNA(n+1) + phosphate = RNA(n) + a ribonucleoside 5'-diphosphate. Functionally, involved in mRNA degradation. Catalyzes the phosphorolysis of single-stranded polyribonucleotides processively in the 3'- to 5'-direction. In Vibrio cholerae serotype O1 (strain ATCC 39315 / El Tor Inaba N16961), this protein is Polyribonucleotide nucleotidyltransferase.